The primary structure comprises 1195 residues: Zinc finger and BTB domain-containing protein 38 (1195 aa).

One can recognise a BTB domain in the interval 33 to 100 (CDVTIIVEDT…IYSSTVVVKR (68 aa)). A Glycyl lysine isopeptide (Lys-Gly) (interchain with G-Cter in SUMO2) cross-link involves residue Lys43. Position 130 is a phosphoserine (Ser130). Glycyl lysine isopeptide (Lys-Gly) (interchain with G-Cter in SUMO2) cross-links involve residues Lys145, Lys148, Lys151, and Lys259. The tract at residues 264 to 334 (RKPKTFSIPQ…QSSDVPGPPA (71 aa)) is disordered. Over residues 270 to 280 (SIPQDSDSATE) the composition is skewed to polar residues. Positions 300–523 (PAAVLTRSKS…RRYQCIFCLE (224 aa)) are interaction with CBFA2T3. Ser309 bears the Phosphoserine mark. Residues 314 to 323 (GDVHFSREDE) are compositionally biased toward basic and acidic residues. Residues 342-364 (YNCSCCSKAFDSSTLLSAHMQLH) form a C2H2-type 1 zinc finger. The C2H2-type 2; degenerate zinc finger occupies 371–395 (LVCKYCNKQFTTLNRLDRHEQICMR). 3 C2H2-type zinc fingers span residues 460–482 (YSCV…ANVH), 488–510 (YPCH…EIWH), and 516–539 (YQCI…KSFH). Glycyl lysine isopeptide (Lys-Gly) (interchain with G-Cter in SUMO2) cross-links involve residues Lys550, Lys557, Lys754, Lys758, Lys763, Lys804, Lys814, Lys821, Lys842, Lys850, and Lys857. The tract at residues 745-804 (SDPAVSQSLKDDSKPEPDKVGRFASRPKSIKEKKKTTSHTRGEIPEESNYVADPGGSLSK) is disordered. Over residues 753-765 (LKDDSKPEPDKVG) the composition is skewed to basic and acidic residues. 2 disordered regions span residues 871–891 (QEEP…PLGL) and 903–922 (FDDA…YYNY). Glycyl lysine isopeptide (Lys-Gly) (interchain with G-Cter in SUMO2) cross-links involve residues Lys923, Lys964, Lys969, Lys977, Lys981, Lys991, Lys1017, and Lys1026. 5 consecutive C2H2-type zinc fingers follow at residues 1010–1032 (YACE…MRCH), 1038–1060 (YQCK…ERIH), 1066–1088 (FVCQ…ERIH), 1094–1116 (YHCQ…EQRH), and 1125–1147 (YACF…QKKH). Glycyl lysine isopeptide (Lys-Gly) (interchain with G-Cter in SUMO2) cross-links involve residues Lys1109, Lys1132, Lys1135, Lys1150, and Lys1183.

Interacts with CBFA2T3. Interacts with ZBTB4. Interacts with RBBP6. In terms of processing, ubiquitinated by RBBP6; leading to its degradation by the proteasome.

The protein resides in the nucleus. It is found in the chromosome. Transcriptional regulator with bimodal DNA-binding specificity. Binds with a higher affinity to methylated CpG dinucleotides in the consensus sequence 5'-CGCG-3' but can also bind to E-box elements (5'-CACGTG-3'). Can also bind specifically to a single methyl-CpG pair. Represses transcription in a methyl-CpG-dependent manner. Plays an important role in regulating DNA replication and common fragile sites (CFS) stability in a RBBP6- and MCM10-dependent manner; represses expression of MCM10 which plays an important role in DNA-replication. Acts as a transcriptional activator. May be involved in the differentiation and/or survival of late postmitotic neurons. The protein is Zinc finger and BTB domain-containing protein 38 of Homo sapiens (Human).